Here is a 729-residue protein sequence, read N- to C-terminus: Isocitrate dehydrogenase [NADP] (729 aa).

2 residues coordinate NADP(+): Asn-83 and Ser-85. D-threo-isocitrate is bound by residues Ser-121, Asn-124, Arg-128, Arg-134, and Lys-244. Asn-124 lines the NADP(+) pocket. Asp-337 provides a ligand contact to Mg(2+). Residues Tyr-407 and Arg-534 each contribute to the D-threo-isocitrate site. Mg(2+)-binding residues include Asp-535 and Asp-539. NADP(+) is bound by residues Ser-572, His-576, Arg-587, Asp-589, and Arg-636.

The protein belongs to the monomeric-type IDH family. As to quaternary structure, monomer. It depends on Mg(2+) as a cofactor. Mn(2+) is required as a cofactor.

It catalyses the reaction D-threo-isocitrate + NADP(+) = 2-oxoglutarate + CO2 + NADPH. In terms of biological role, catalyzes the oxidative decarboxylation of isocitrate to 2-oxoglutarate and carbon dioxide with the concomitant reduction of NADP(+). This Corynebacterium efficiens (strain DSM 44549 / YS-314 / AJ 12310 / JCM 11189 / NBRC 100395) protein is Isocitrate dehydrogenase [NADP].